The following is a 345-amino-acid chain: Carbamoyl phosphate synthase small chain (345 aa).

The interval 1-169 (MKKYLVMEDG…FVKGEEGGTV (169 aa)) is CPSase. The L-glutamine site is built by Ser45, Gly213, and Gly215. The region spanning 168–345 (TVLFIDLGSK…GEMKRRIGYA (178 aa)) is the Glutamine amidotransferase type-1 domain. Cys242 serves as the catalytic Nucleophile. Positions 243, 246, 282, 284, and 285 each coordinate L-glutamine. Active-site residues include His321 and Glu323.

This sequence belongs to the CarA family. In terms of assembly, composed of two chains; the small (or glutamine) chain promotes the hydrolysis of glutamine to ammonia, which is used by the large (or ammonia) chain to synthesize carbamoyl phosphate. Tetramer of heterodimers (alpha,beta)4.

The enzyme catalyses hydrogencarbonate + L-glutamine + 2 ATP + H2O = carbamoyl phosphate + L-glutamate + 2 ADP + phosphate + 2 H(+). It catalyses the reaction L-glutamine + H2O = L-glutamate + NH4(+). Its pathway is amino-acid biosynthesis; L-arginine biosynthesis; carbamoyl phosphate from bicarbonate: step 1/1. It participates in pyrimidine metabolism; UMP biosynthesis via de novo pathway; (S)-dihydroorotate from bicarbonate: step 1/3. Small subunit of the glutamine-dependent carbamoyl phosphate synthetase (CPSase). CPSase catalyzes the formation of carbamoyl phosphate from the ammonia moiety of glutamine, carbonate, and phosphate donated by ATP, constituting the first step of 2 biosynthetic pathways, one leading to arginine and/or urea and the other to pyrimidine nucleotides. The small subunit (glutamine amidotransferase) binds and cleaves glutamine to supply the large subunit with the substrate ammonia. This Thermoplasma volcanium (strain ATCC 51530 / DSM 4299 / JCM 9571 / NBRC 15438 / GSS1) protein is Carbamoyl phosphate synthase small chain.